The primary structure comprises 323 residues: COP9 signalosome complex subunit 6 (323 aa).

One can recognise an MPN domain in the interval 37 to 170 (VALHPLVILN…VSVFESVIDI (134 aa)).

This sequence belongs to the peptidase M67A family. CSN6 subfamily. In terms of assembly, component of the CSN complex, composed of COPS1/GPS1, COPS2, COPS3, COPS4, COPS5, COPS6, COPS7 (COPS7A or COPS7B), COPS8 and COPS9. In the complex, it probably interacts directly with COPS2, COPS4, COPS5, COPS7 (COPS7A or COPS7B) and COPS9. Interacts with the translation initiation factor EIF3S6. Interacts weakly with RBX1. Directly interacts with COP1 and 14-3-3 protein sigma/SFN. Interacts with ERCC6.

It localises to the cytoplasm. The protein localises to the nucleus. Component of the COP9 signalosome complex (CSN), a complex involved in various cellular and developmental processes. The CSN complex is an essential regulator of the ubiquitin (Ubl) conjugation pathway by mediating the deneddylation of the cullin subunits of SCF-type E3 ligase complexes, leading to decrease the Ubl ligase activity of SCF-type complexes such as SCF, CSA or DDB2. The complex is also involved in phosphorylation of p53/TP53, c-jun/JUN, IkappaBalpha/NFKBIA, ITPK1 and IRF8, possibly via its association with CK2 and PKD kinases. CSN-dependent phosphorylation of TP53 and JUN promotes and protects degradation by the Ubl system, respectively. Has some glucocorticoid receptor-responsive activity. Stabilizes COP1 through reducing COP1 auto-ubiquitination and decelerating COP1 turnover rate, hence regulates the ubiquitination of COP1 targets, including SFN. This chain is COP9 signalosome complex subunit 6 (COPS6), found in Sus scrofa (Pig).